A 279-amino-acid chain; its full sequence is Oxygen-dependent coproporphyrinogen-III oxidase (279 aa).

Ser-102 provides a ligand contact to substrate. A divalent metal cation-binding residues include His-106 and His-116. His-116 serves as the catalytic Proton donor. 118 to 120 (NTR) is a substrate binding site. The a divalent metal cation site is built by His-149 and His-179. The tract at residues 244–279 (YVEFNLLYDRGTKFGLMTDGNVEAILMSLPPEVKWA) is important for dimerization.

It belongs to the aerobic coproporphyrinogen-III oxidase family. In terms of assembly, homodimer. A divalent metal cation serves as cofactor.

It is found in the cytoplasm. The catalysed reaction is coproporphyrinogen III + O2 + 2 H(+) = protoporphyrinogen IX + 2 CO2 + 2 H2O. It functions in the pathway porphyrin-containing compound metabolism; protoporphyrin-IX biosynthesis; protoporphyrinogen-IX from coproporphyrinogen-III (O2 route): step 1/1. In terms of biological role, involved in the heme biosynthesis. Catalyzes the aerobic oxidative decarboxylation of propionate groups of rings A and B of coproporphyrinogen-III to yield the vinyl groups in protoporphyrinogen-IX. This Rickettsia bellii (strain RML369-C) protein is Oxygen-dependent coproporphyrinogen-III oxidase.